The chain runs to 202 residues: MTIDNLAFEKALYDKGYTYICGVDEAGRGPLAGPVVAAAVIFEKGFYHEDINDSKTLSAKKRETLFELIKQHALAIGVSVVNHEVIDKINILEAARHAMEDAISKLKIKPQYALTDHMDIKGIPYTSIKHGDQLSISIAAASIIAKVTRDKLMVDYDEVYPQYGFKDHKGYGTRKHLEALNLYGVSPIHRKTFAPVAKLLKQ.

The RNase H type-2 domain maps to 18–202 (TYICGVDEAG…FAPVAKLLKQ (185 aa)). A divalent metal cation contacts are provided by Asp24, Glu25, and Asp116.

This sequence belongs to the RNase HII family. The cofactor is Mn(2+). Requires Mg(2+) as cofactor.

It localises to the cytoplasm. It catalyses the reaction Endonucleolytic cleavage to 5'-phosphomonoester.. In terms of biological role, endonuclease that specifically degrades the RNA of RNA-DNA hybrids. The chain is Ribonuclease HII from Acholeplasma laidlawii (strain PG-8A).